The primary structure comprises 426 residues: Enolase (426 aa).

Glutamine 163 contacts (2R)-2-phosphoglycerate. The active-site Proton donor is glutamate 205. Residues aspartate 242, glutamate 285, and aspartate 312 each coordinate Mg(2+). Lysine 337, arginine 366, serine 367, and lysine 388 together coordinate (2R)-2-phosphoglycerate. Lysine 337 (proton acceptor) is an active-site residue.

It belongs to the enolase family. Requires Mg(2+) as cofactor.

It localises to the cytoplasm. The protein resides in the secreted. Its subcellular location is the cell surface. It carries out the reaction (2R)-2-phosphoglycerate = phosphoenolpyruvate + H2O. It functions in the pathway carbohydrate degradation; glycolysis; pyruvate from D-glyceraldehyde 3-phosphate: step 4/5. Functionally, catalyzes the reversible conversion of 2-phosphoglycerate (2-PG) into phosphoenolpyruvate (PEP). It is essential for the degradation of carbohydrates via glycolysis. The protein is Enolase of Caulobacter vibrioides (strain ATCC 19089 / CIP 103742 / CB 15) (Caulobacter crescentus).